A 36-amino-acid polypeptide reads, in one-letter code: Toxin Iob1 (36 aa).

Disulfide bonds link Cys6–Cys21, Cys13–Cys26, and Cys20–Cys33.

It localises to the secreted. Binds reversibly and blocks N-type voltage-gated calcium channels (Cav). The chain is Toxin Iob1 from Isyndus obscurus (Assassin bug).